The chain runs to 470 residues: Nuclear segregation protein BFR1 (470 aa).

Coiled coils occupy residues 17–178 and 237–281; these read DKKL…NGLN and NEFK…THAK. Serine 260 carries the phosphoserine modification. A Phosphothreonine modification is found at threonine 336. The tract at residues 346–368 is disordered; sequence APSKSKKYKKKNQQKNTENEQPA. The segment covering 349 to 358 has biased composition (basic residues); the sequence is KSKKYKKKNQ. Serine 369 is subject to Phosphoserine. Residues 398 to 469 are a coiled coil; sequence NSDDVKITVE…EQEESEKDKE (72 aa). The tract at residues 447-470 is disordered; it reads QQVKKELEEKRLKEQEESEKDKEN.

Its function is as follows. Implicated in secretion, nuclear segregation and in maintenance of cell size. This Saccharomyces cerevisiae (strain ATCC 204508 / S288c) (Baker's yeast) protein is Nuclear segregation protein BFR1 (BFR1).